We begin with the raw amino-acid sequence, 1224 residues long: DNA-directed RNA polymerase subunit beta'' (1224 aa).

Positions 233, 308, 315, and 318 each coordinate Zn(2+).

It belongs to the RNA polymerase beta' chain family. RpoC2 subfamily. In terms of assembly, in plastids the minimal PEP RNA polymerase catalytic core is composed of four subunits: alpha, beta, beta', and beta''. When a (nuclear-encoded) sigma factor is associated with the core the holoenzyme is formed, which can initiate transcription. Requires Zn(2+) as cofactor.

Its subcellular location is the plastid. The protein resides in the chloroplast. The enzyme catalyses RNA(n) + a ribonucleoside 5'-triphosphate = RNA(n+1) + diphosphate. Its function is as follows. DNA-dependent RNA polymerase catalyzes the transcription of DNA into RNA using the four ribonucleoside triphosphates as substrates. This chain is DNA-directed RNA polymerase subunit beta'', found in Pinus thunbergii (Japanese black pine).